A 196-amino-acid polypeptide reads, in one-letter code: Peptidyl-tRNA hydrolase (196 aa).

Residue histidine 15 participates in tRNA binding. The active-site Proton acceptor is the histidine 20. TRNA-binding residues include tyrosine 66, asparagine 68, and asparagine 114.

The protein belongs to the PTH family. Monomer.

The protein localises to the cytoplasm. It catalyses the reaction an N-acyl-L-alpha-aminoacyl-tRNA + H2O = an N-acyl-L-amino acid + a tRNA + H(+). Functionally, hydrolyzes ribosome-free peptidyl-tRNAs (with 1 or more amino acids incorporated), which drop off the ribosome during protein synthesis, or as a result of ribosome stalling. In terms of biological role, catalyzes the release of premature peptidyl moieties from peptidyl-tRNA molecules trapped in stalled 50S ribosomal subunits, and thus maintains levels of free tRNAs and 50S ribosomes. The sequence is that of Peptidyl-tRNA hydrolase from Polynucleobacter necessarius subsp. necessarius (strain STIR1).